A 380-amino-acid polypeptide reads, in one-letter code: GDP-mannose:cellobiosyl-diphosphopolyprenol alpha-mannosyltransferase (380 aa).

It belongs to the glycosyltransferase group 1 family. Glycosyltransferase 4 subfamily.

It catalyses the reaction beta-D-Glc-(1-&gt;4)-alpha-D-Glc-di-trans,octa-cis-undecaprenyl diphosphate + GDP-alpha-D-mannose = alpha-D-Man-(1-&gt;3)-beta-D-Glc-(1-&gt;4)-alpha-D-Glc-1-di-trans,octa-cis-undecaprenyl diphosphate + GDP + H(+). Involved in the biosynthesis of the exopolysaccharide xanthan, a polymer that is comprised of repeating pentasaccharide units with the structure of a beta-(1,4)-linked D-glucose backbone with trisaccharide side chains composed of mannose-beta-(1,4)-glucuronic acid-beta-(1,2)-mannose attached to alternate glucose residues in the backbone by alpha-(1,3) linkages. Xanthan is involved in pathogenicity but has also been used in a variety of applications as a specialty polymer for commercial applications, including food additives, where they act as viscosifying, stabilizing, emulsifying, or gelling agents. The polypeptide is GDP-mannose:cellobiosyl-diphosphopolyprenol alpha-mannosyltransferase (gumH) (Xanthomonas oryzae pv. oryzae (strain PXO99A)).